The primary structure comprises 485 residues: Zinc finger protein 639 (485 aa).

Positions 1-14 (MNEYPKKRKRKTLH) are enriched in basic residues. 2 disordered regions span residues 1-23 (MNEY…DSSG) and 54-80 (DNKD…ARNR). Ser-60 is subject to Phosphoserine. Lys-76 is covalently cross-linked (Glycyl lysine isopeptide (Lys-Gly) (interchain with G-Cter in SUMO2)). Ser-88 carries the phosphoserine modification. A disordered region spans residues 115-136 (ASPESVHQHTQEESPIEVHTSE). Glycyl lysine isopeptide (Lys-Gly) (interchain with G-Cter in SUMO2) cross-links involve residues Lys-177, Lys-181, and Lys-226. 8 consecutive C2H2-type zinc fingers follow at residues 204–227 (YKCE…ILKH), 233–255 (NVCR…AKLH), 260–283 (YICK…ADTH), 289–311 (YWCE…FQEH), 374–397 (FVCQ…AIEH), 403–425 (HVCD…LNSH), 431–454 (YLCQ…DFKH), and 460–482 (HKCS…LQVH). Residues 371–455 (KNFFVCQVCG…LKIHLDFKHS (85 aa)) form an interaction with CTNNA2 region.

The protein belongs to the krueppel C2H2-type zinc-finger protein family. In terms of assembly, interacts with CTNNA2.

It is found in the nucleus. Functionally, binds DNA and may function as a transcriptional repressor. The sequence is that of Zinc finger protein 639 (Znf639) from Mus musculus (Mouse).